The following is a 37-amino-acid chain: Large ribosomal subunit protein bL36c (37 aa).

This sequence belongs to the bacterial ribosomal protein bL36 family.

It localises to the plastid. The protein resides in the chloroplast. In Pisum sativum (Garden pea), this protein is Large ribosomal subunit protein bL36c (rpl36).